A 231-amino-acid chain; its full sequence is Phosphoglycolate phosphatase (231 aa).

Aspartate 9 acts as the Nucleophile in catalysis. Mg(2+) contacts are provided by aspartate 9 and aspartate 11. Residue lysine 154 participates in substrate binding. The Mg(2+) site is built by aspartate 177 and aspartate 181.

It belongs to the archaeal SPP-like hydrolase family. The cofactor is Mg(2+).

The catalysed reaction is 2-phosphoglycolate + H2O = glycolate + phosphate. In terms of biological role, catalyzes the dephosphorylation of 2-phosphoglycolate. The sequence is that of Phosphoglycolate phosphatase from Nitrosopumilus maritimus (strain SCM1).